We begin with the raw amino-acid sequence, 399 residues long: Tryptophan synthase beta chain (399 aa).

K86 carries the N6-(pyridoxal phosphate)lysine modification.

Belongs to the TrpB family. Tetramer of two alpha and two beta chains. Requires pyridoxal 5'-phosphate as cofactor.

It catalyses the reaction (1S,2R)-1-C-(indol-3-yl)glycerol 3-phosphate + L-serine = D-glyceraldehyde 3-phosphate + L-tryptophan + H2O. It participates in amino-acid biosynthesis; L-tryptophan biosynthesis; L-tryptophan from chorismate: step 5/5. Its function is as follows. The beta subunit is responsible for the synthesis of L-tryptophan from indole and L-serine. This is Tryptophan synthase beta chain (trpB) from Buchnera aphidicola subsp. Schizaphis graminum (strain Sg).